A 364-amino-acid polypeptide reads, in one-letter code: Fructose-bisphosphate aldolase B (364 aa).

Ala-2 bears the N-acetylalanine mark. At Lys-13 the chain carries N6-succinyllysine. At Ser-36 the chain carries Phosphoserine. Thr-39 is modified (phosphothreonine). Arg-43 is a beta-D-fructose 1,6-bisphosphate binding site. The residue at position 89 (Ser-89) is a Phosphoserine. Thr-119 is subject to Phosphothreonine. Residue Lys-121 is modified to N6-succinyllysine. Residue Ser-132 is modified to Phosphoserine. Glu-188 serves as the catalytic Proton acceptor. Catalysis depends on Lys-230, which acts as the Schiff-base intermediate with dihydroxyacetone-P. Residues Ser-272, Ser-276, Ser-299, and Ser-301 each carry the phosphoserine modification. Position 272–274 (272–274) interacts with beta-D-fructose 1,6-bisphosphate; sequence SGG. Position 304 (Arg-304) interacts with beta-D-fructose 1,6-bisphosphate. Ser-309 carries the phosphoserine modification. Lys-317 carries the N6-succinyllysine modification.

The protein belongs to the class I fructose-bisphosphate aldolase family. Homotetramer. Interacts with BBS1, BBS2, BBS4 and BBS7. Forms a ternary complex with G6PD and TP53; this interaction is direct.

The protein resides in the cytoplasm. It localises to the cytosol. The protein localises to the cytoskeleton. Its subcellular location is the microtubule organizing center. It is found in the centrosome. The protein resides in the centriolar satellite. It catalyses the reaction beta-D-fructose 1,6-bisphosphate = D-glyceraldehyde 3-phosphate + dihydroxyacetone phosphate. It carries out the reaction beta-D-fructose 1-phosphate = D-glyceraldehyde + dihydroxyacetone phosphate. It participates in carbohydrate degradation; glycolysis; D-glyceraldehyde 3-phosphate and glycerone phosphate from D-glucose: step 4/4. Its pathway is carbohydrate biosynthesis; gluconeogenesis. It functions in the pathway carbohydrate metabolism; fructose metabolism. Functionally, catalyzes the aldol cleavage of fructose 1,6-biphosphate to form two triosephosphates dihydroxyacetone phosphate and D-glyceraldehyde 3-phosphate in glycolysis as well as the reverse stereospecific aldol addition reaction in gluconeogenesis. In fructolysis, metabolizes fructose 1-phosphate derived from the phosphorylation of dietary fructose by fructokinase into dihydroxyacetone phosphate and D-glyceraldehyde. Acts as an adapter independently of its enzymatic activity, exerts a tumor suppressor role by stabilizing the ternary complex with G6PD and TP53 to inhibit G6PD activity and keep oxidative pentose phosphate metabolism in check. The protein is Fructose-bisphosphate aldolase B (ALDOB) of Oryctolagus cuniculus (Rabbit).